The chain runs to 48 residues: Sperm protamine P1 (48 aa).

Belongs to the protamine P1 family. Testis.

It localises to the nucleus. Its subcellular location is the chromosome. In terms of biological role, protamines substitute for histones in the chromatin of sperm during the haploid phase of spermatogenesis. They compact sperm DNA into a highly condensed, stable and inactive complex. This is Sperm protamine P1 (PRM1) from Eptesicus fuscus (Big brown bat).